A 419-amino-acid polypeptide reads, in one-letter code: Tyrosine--tRNA ligase (419 aa).

L-tyrosine is bound at residue tyrosine 34. The 'HIGH' region signature appears at proline 39 to histidine 48. Tyrosine 169 and glutamine 173 together coordinate L-tyrosine. The short motif at lysine 229 to serine 233 is the 'KMSKS' region element. Residue lysine 232 coordinates ATP. In terms of domain architecture, S4 RNA-binding spans leucine 352 to lysine 419.

Belongs to the class-I aminoacyl-tRNA synthetase family. TyrS type 1 subfamily. Homodimer.

The protein localises to the cytoplasm. It catalyses the reaction tRNA(Tyr) + L-tyrosine + ATP = L-tyrosyl-tRNA(Tyr) + AMP + diphosphate + H(+). In terms of biological role, catalyzes the attachment of tyrosine to tRNA(Tyr) in a two-step reaction: tyrosine is first activated by ATP to form Tyr-AMP and then transferred to the acceptor end of tRNA(Tyr). This Streptococcus agalactiae serotype V (strain ATCC BAA-611 / 2603 V/R) protein is Tyrosine--tRNA ligase.